Here is a 215-residue protein sequence, read N- to C-terminus: Outer-membrane lipoprotein LolB (215 aa).

A signal peptide spans 1–21 (MLIPKKYYLLIILLSNCLLAS). Residue Cys-22 is the site of N-palmitoyl cysteine attachment. A lipid anchor (S-diacylglycerol cysteine) is attached at Cys-22.

This sequence belongs to the LolB family. As to quaternary structure, monomer.

It is found in the cell outer membrane. Its function is as follows. Plays a critical role in the incorporation of lipoproteins in the outer membrane after they are released by the LolA protein. This chain is Outer-membrane lipoprotein LolB, found in Baumannia cicadellinicola subsp. Homalodisca coagulata.